Here is a 244-residue protein sequence, read N- to C-terminus: NAD-dependent protein deacylase SIR2rp3 (244 aa).

Positions 1 to 239 (MRRPNGMIAI…PAWADEVLHG (239 aa)) constitute a Deacetylase sirtuin-type domain. Residue 13 to 32 (GAGISAESGISTFRDQNGLW) coordinates NAD(+). The substrate site is built by Y57 and R60. 95 to 98 (QNID) lines the NAD(+) pocket. H113 (proton acceptor) is an active-site residue. Zn(2+)-binding residues include C121 and C141. Residues 181-183 (GTS) and A225 contribute to the NAD(+) site.

The protein belongs to the sirtuin family. Class III subfamily. Requires Zn(2+) as cofactor.

It localises to the mitochondrion. The enzyme catalyses N(6)-malonyl-L-lysyl-[protein] + NAD(+) + H2O = 2''-O-malonyl-ADP-D-ribose + nicotinamide + L-lysyl-[protein]. It carries out the reaction N(6)-succinyl-L-lysyl-[protein] + NAD(+) + H2O = 2''-O-succinyl-ADP-D-ribose + nicotinamide + L-lysyl-[protein]. It catalyses the reaction N(6)-glutaryl-L-lysyl-[protein] + NAD(+) + H2O = 2''-O-glutaryl-ADP-D-ribose + nicotinamide + L-lysyl-[protein]. In terms of biological role, NAD-dependent lysine demalonylase, desuccinylase and deglutarylase that specifically removes malonyl, succinyl and glutaryl groups on target proteins. Has weak NAD-dependent protein deacetylase activity; however this activity may not be physiologically relevant in vivo. The sequence is that of NAD-dependent protein deacylase SIR2rp3 (SIR2rp3) from Trypanosoma brucei brucei (strain 927/4 GUTat10.1).